A 304-amino-acid chain; its full sequence is Glutaminase (304 aa).

The substrate site is built by Ser-63, Asn-114, Glu-158, Asn-165, Tyr-189, Tyr-240, and Val-258.

This sequence belongs to the glutaminase family. Homotetramer.

It carries out the reaction L-glutamine + H2O = L-glutamate + NH4(+). The chain is Glutaminase from Shewanella baltica (strain OS223).